Here is a 695-residue protein sequence, read N- to C-terminus: L-type lectin-domain containing receptor kinase S.7 (695 aa).

Residues 1–23 form the signal peptide; it reads MPPRCRRLPLLFILLLAVRPLSA. The Extracellular portion of the chain corresponds to 24–331; the sequence is AAASSIAAAP…NHRRRHLFYK (308 aa). A legume-lectin like region spans residues 37–276; that stretch reads YRRISWASNL…VERWTFRTFG (240 aa). N-linked (GlcNAc...) asparagine glycans are attached at residues Asn45 and Asn279. Positions 286–320 are enriched in pro residues; that stretch reads PTKYIGPMPPNNQPLPPPPSPSPSPPPPSPPPPPH. The interval 286–323 is disordered; sequence PTKYIGPMPPNNQPLPPPPSPSPSPPPPSPPPPPHPNH. Residues 332-352 form a helical membrane-spanning segment; the sequence is VLGGVLGGMVLLGLVVVGSAV. The Cytoplasmic segment spans residues 353 to 695; that stretch reads LLGRSVRRKN…TANTAFFSCR (343 aa). Position 376 is a phosphothreonine (Thr376). Ser378 carries the post-translational modification Phosphoserine. Residues Thr386 and Thr403 each carry the phosphothreonine modification. Positions 389–661 constitute a Protein kinase domain; that stretch reads FDSGNVIGVG…SMLDGTAPLI (273 aa). Residues 395 to 403 and Lys418 contribute to the ATP site; that span reads IGVGGSGAT. The active-site Proton acceptor is the Asp514. Position 657 is a phosphothreonine (Thr657).

In the N-terminal section; belongs to the leguminous lectin family. The protein in the C-terminal section; belongs to the protein kinase superfamily. Ser/Thr protein kinase family. In terms of assembly, interacts with INP1. Interaction with INP1 is required for DAF1 polar localization at the future aperture sites in tetrads. Post-translationally, autophosphorylated at Thr-376; Ser-378; Thr-386; Thr-403 and Thr-657. In terms of tissue distribution, expressed in roots, leaves, lemma, palea, pistil and anthers.

It localises to the cell membrane. Its subcellular location is the cytoplasm. The protein localises to the cytosol. It carries out the reaction L-seryl-[protein] + ATP = O-phospho-L-seryl-[protein] + ADP + H(+). It catalyses the reaction L-threonyl-[protein] + ATP = O-phospho-L-threonyl-[protein] + ADP + H(+). In terms of biological role, legume-lectin receptor-like kinase required for normal pollen development and male fertility. Regulates pollen exine assembly and aperture development. Plays a critical role in annulus formation, and may participate in the formation of the fibrillar-granular layer underneath the operculum. May function by regulating the expression of genes involved in pollen exine development. Kinase activity is required for its function in pollen development. The protein is L-type lectin-domain containing receptor kinase S.7 of Oryza sativa subsp. japonica (Rice).